Reading from the N-terminus, the 251-residue chain is Imidazole glycerol phosphate synthase subunit HisF (251 aa).

Active-site residues include aspartate 11 and aspartate 130.

Belongs to the HisA/HisF family. As to quaternary structure, heterodimer of HisH and HisF.

It localises to the cytoplasm. It catalyses the reaction 5-[(5-phospho-1-deoxy-D-ribulos-1-ylimino)methylamino]-1-(5-phospho-beta-D-ribosyl)imidazole-4-carboxamide + L-glutamine = D-erythro-1-(imidazol-4-yl)glycerol 3-phosphate + 5-amino-1-(5-phospho-beta-D-ribosyl)imidazole-4-carboxamide + L-glutamate + H(+). The protein operates within amino-acid biosynthesis; L-histidine biosynthesis; L-histidine from 5-phospho-alpha-D-ribose 1-diphosphate: step 5/9. Its function is as follows. IGPS catalyzes the conversion of PRFAR and glutamine to IGP, AICAR and glutamate. The HisF subunit catalyzes the cyclization activity that produces IGP and AICAR from PRFAR using the ammonia provided by the HisH subunit. This is Imidazole glycerol phosphate synthase subunit HisF from Flavobacterium psychrophilum (strain ATCC 49511 / DSM 21280 / CIP 103535 / JIP02/86).